A 321-amino-acid polypeptide reads, in one-letter code: MAFLHNGNHTAVTEFILLGLTDDPVLRIVLFTIILCIYLVTVSGNLSTILLIRVSSQLHHPMYFFLSHLASADIGYSSSVTPNMLVNFLVKQNTISYIGCSIQFGSAAFFGGLECFLLAVMAYDRFVAICNPLLYSTKMSTQVCVQLVVGSYIGGFLNASFATVSFLFLFFCGPNIINHFFCDFAPLIELSCSDVRISVLVTSFSAGTVTMLTVLVIAISYTYILITILKMRSTEGRHKAFSTCTSHLTAVSLFYGTITFIYVMPKSRYSTDQNKVVSVFYMVVIPMLNPLIYSLRNNEIKGALRRHLGKKIFSQSNILFY.

The Extracellular portion of the chain corresponds to 1 to 28 (MAFLHNGNHTAVTEFILLGLTDDPVLRI). The N-linked (GlcNAc...) asparagine glycan is linked to Asn8. Residues 29-49 (VLFTIILCIYLVTVSGNLSTI) form a helical membrane-spanning segment. Topologically, residues 50 to 57 (LLIRVSSQ) are cytoplasmic. A helical membrane pass occupies residues 58–78 (LHHPMYFFLSHLASADIGYSS). The Extracellular portion of the chain corresponds to 79–102 (SVTPNMLVNFLVKQNTISYIGCSI). A disulfide bond links Cys100 and Cys192. Residues 103–123 (QFGSAAFFGGLECFLLAVMAY) form a helical membrane-spanning segment. Topologically, residues 124-136 (DRFVAICNPLLYS) are cytoplasmic. The chain crosses the membrane as a helical span at residues 137–157 (TKMSTQVCVQLVVGSYIGGFL). At 158–199 (NASFATVSFLFLFFCGPNIINHFFCDFAPLIELSCSDVRISV) the chain is on the extracellular side. A helical transmembrane segment spans residues 200–220 (LVTSFSAGTVTMLTVLVIAIS). Topologically, residues 221–240 (YTYILITILKMRSTEGRHKA) are cytoplasmic. The chain crosses the membrane as a helical span at residues 241–261 (FSTCTSHLTAVSLFYGTITFI). The Extracellular segment spans residues 262-274 (YVMPKSRYSTDQN). Residues 275 to 295 (KVVSVFYMVVIPMLNPLIYSL) form a helical membrane-spanning segment. Topologically, residues 296–321 (RNNEIKGALRRHLGKKIFSQSNILFY) are cytoplasmic.

The protein belongs to the G-protein coupled receptor 1 family.

It localises to the cell membrane. Functionally, potential odorant receptor. The sequence is that of Olfactory receptor 5P60 from Mus musculus (Mouse).